The chain runs to 381 residues: Alkanesulfonate monooxygenase (381 aa).

It belongs to the SsuD family. In terms of assembly, homotetramer.

It catalyses the reaction an alkanesulfonate + FMNH2 + O2 = an aldehyde + FMN + sulfite + H2O + 2 H(+). Its function is as follows. Catalyzes the desulfonation of aliphatic sulfonates. The sequence is that of Alkanesulfonate monooxygenase from Escherichia coli O8 (strain IAI1).